Reading from the N-terminus, the 78-residue chain is UPF0291 protein Exig_1097 (78 aa).

Residues 57–78 are disordered; that stretch reads EEGTDVTPEKLKQAQEEERNKQ. The segment covering 63 to 78 has biased composition (basic and acidic residues); it reads TPEKLKQAQEEERNKQ.

This sequence belongs to the UPF0291 family.

Its subcellular location is the cytoplasm. The chain is UPF0291 protein Exig_1097 from Exiguobacterium sibiricum (strain DSM 17290 / CCUG 55495 / CIP 109462 / JCM 13490 / 255-15).